A 272-amino-acid chain; its full sequence is L-aminoadipate-semialdehyde dehydrogenase-phosphopantetheinyl transferase (272 aa).

The protein belongs to the P-Pant transferase superfamily. AcpS family.

It carries out the reaction apo-[ACP] + CoA = holo-[ACP] + adenosine 3',5'-bisphosphate + H(+). Its function is as follows. Catalyzes the transfer of a 4'-phosphopantetheine moiety from coenzyme A to a serine residue of acceptor proteins, such as alpha-aminoadipate reductase. Necessary for alpha-aminoadipate reductase activity. The protein is L-aminoadipate-semialdehyde dehydrogenase-phosphopantetheinyl transferase of Saccharomyces cerevisiae (strain ATCC 204508 / S288c) (Baker's yeast).